Here is a 104-residue protein sequence, read N- to C-terminus: Iron-sulfur cluster assembly protein CyaY (104 aa).

It belongs to the frataxin family.

In terms of biological role, involved in iron-sulfur (Fe-S) cluster assembly. May act as a regulator of Fe-S biogenesis. This Aeromonas salmonicida (strain A449) protein is Iron-sulfur cluster assembly protein CyaY.